Reading from the N-terminus, the 325-residue chain is GMP reductase (325 aa).

Catalysis depends on Cys-173, which acts as the Thioimidate intermediate. 202-225 (IIADGGIRDHGDIAKSVRFGASMV) lines the NADP(+) pocket.

This sequence belongs to the IMPDH/GMPR family. GuaC type 2 subfamily.

The catalysed reaction is IMP + NH4(+) + NADP(+) = GMP + NADPH + 2 H(+). Functionally, catalyzes the irreversible NADPH-dependent deamination of GMP to IMP. It functions in the conversion of nucleobase, nucleoside and nucleotide derivatives of G to A nucleotides, and in maintaining the intracellular balance of A and G nucleotides. The polypeptide is GMP reductase (Variovorax paradoxus (strain S110)).